The sequence spans 60 residues: MDPCECSKGGTCNCGGSCTCTNCSCTTCKKSCCPCCPSGCPKCASGCVCKGKTCDAACCQ.

Positions Met-1–Cys-28 are beta. Cys-4, Cys-6, Cys-12, Cys-14, Cys-18, Cys-20, Cys-23, Cys-25, Cys-28, Cys-32, Cys-33, Cys-35, Cys-36, Cys-40, Cys-43, Cys-47, Cys-49, Cys-54, Cys-58, and Cys-59 together coordinate a divalent metal cation. Residues Lys-29–Gln-60 are alpha.

This sequence belongs to the metallothionein superfamily. Type 1 family.

In terms of biological role, metallothioneins have a high content of cysteine residues that bind various heavy metals. The protein is Metallothionein (mt) of Perca fluviatilis (European perch).